A 306-amino-acid chain; its full sequence is Porphobilinogen deaminase (306 aa).

C244 carries the post-translational modification S-(dipyrrolylmethanemethyl)cysteine.

The protein belongs to the HMBS family. As to quaternary structure, monomer. The cofactor is dipyrromethane.

The catalysed reaction is 4 porphobilinogen + H2O = hydroxymethylbilane + 4 NH4(+). It functions in the pathway porphyrin-containing compound metabolism; protoporphyrin-IX biosynthesis; coproporphyrinogen-III from 5-aminolevulinate: step 2/4. Functionally, tetrapolymerization of the monopyrrole PBG into the hydroxymethylbilane pre-uroporphyrinogen in several discrete steps. The protein is Porphobilinogen deaminase of Streptococcus sanguinis (strain SK36).